Reading from the N-terminus, the 223-residue chain is Small ribosomal subunit protein uS5 (223 aa).

The disordered stretch occupies residues 1-48; the sequence is MPGRQRRDGGSGPAGQNGPNSGDNSNARGDNRGGGRDRRDGGRGGNAA. The span at 29 to 42 shows a compositional bias: basic and acidic residues; the sequence is GDNRGGGRDRRDGG. An S5 DRBM domain is found at 53–116; the sequence is FIERVVTINR…EEARKSFFRV (64 aa).

Belongs to the universal ribosomal protein uS5 family. In terms of assembly, part of the 30S ribosomal subunit. Contacts proteins S4 and S8.

In terms of biological role, with S4 and S12 plays an important role in translational accuracy. Its function is as follows. Located at the back of the 30S subunit body where it stabilizes the conformation of the head with respect to the body. The polypeptide is Small ribosomal subunit protein uS5 (Rhodococcus erythropolis (strain PR4 / NBRC 100887)).